A 497-amino-acid polypeptide reads, in one-letter code: Cytochrome P450 monooxygenase opdB (497 aa).

Residues Tyr26–Gly46 form a helical membrane-spanning segment. The segment at Met69–Pro90 is disordered. Residue Cys454 participates in heme binding.

It depends on heme as a cofactor.

It localises to the membrane. It functions in the pathway secondary metabolite biosynthesis. In terms of biological role, cytochrome P450 monooxygenase; part of the gene cluster that mediates the biosynthesis of oxopyrrolidines, polyketide-amino acid hybrid compounds with feature structures of tetramic acid. Does not seem to play a role in oxopyrrolidines A and B biosynthesis. May be involved in further modifications of these oxopyrrolidines. This Penicillium oxalicum (strain 114-2 / CGMCC 5302) (Penicillium decumbens) protein is Cytochrome P450 monooxygenase opdB.